Consider the following 268-residue polypeptide: Nickel import ATP-binding protein NikE (268 aa).

The 249-residue stretch at 4-252 (LNVSDLSHHY…SSDAGRVLQN (249 aa)) folds into the ABC transporter domain. 45 to 52 (GRSGCGKS) is a binding site for ATP.

It belongs to the ABC transporter superfamily. Nickel importer (TC 3.A.1.5.3) family. The complex is composed of two ATP-binding proteins (NikD and NikE), two transmembrane proteins (NikB and NikC) and a solute-binding protein (NikA).

Its subcellular location is the cell inner membrane. It carries out the reaction Ni(2+)(out) + ATP + H2O = Ni(2+)(in) + ADP + phosphate + H(+). Its function is as follows. Part of the ABC transporter complex NikABCDE involved in nickel import. Responsible for energy coupling to the transport system. The sequence is that of Nickel import ATP-binding protein NikE from Escherichia coli O6:K15:H31 (strain 536 / UPEC).